A 486-amino-acid chain; its full sequence is Putative protease Do-like 13 (486 aa).

Residues 44–229 are serine protease; the sequence is KINTFSSKPN…IPAPVVKHFI (186 aa). Catalysis depends on charge relay system residues His-83, Asp-114, and Ser-192. The PDZ domain maps to 241 to 334; that stretch reads FCSLNLSYQH…TILLKILREG (94 aa).

This sequence belongs to the peptidase S1C family.

Functionally, putative serine protease. This chain is Putative protease Do-like 13 (DEGP13), found in Arabidopsis thaliana (Mouse-ear cress).